The primary structure comprises 66 residues: DNA-directed RNA polymerase subunit omega (66 aa).

It belongs to the RNA polymerase subunit omega family. As to quaternary structure, the RNAP catalytic core consists of 2 alpha, 1 beta, 1 beta' and 1 omega subunit. When a sigma factor is associated with the core the holoenzyme is formed, which can initiate transcription.

It carries out the reaction RNA(n) + a ribonucleoside 5'-triphosphate = RNA(n+1) + diphosphate. Its function is as follows. Promotes RNA polymerase assembly. Latches the N- and C-terminal regions of the beta' subunit thereby facilitating its interaction with the beta and alpha subunits. In Clostridium botulinum (strain Alaska E43 / Type E3), this protein is DNA-directed RNA polymerase subunit omega.